We begin with the raw amino-acid sequence, 171 residues long: Voltage-dependent P/Q-type calcium channel subunit alpha-1A (171 aa).

A helical membrane pass occupies residues 1–11 (FVTVLGSITDI). One copy of the IV repeat lies at 1 to 171 (FVTVLGSITD…LMLNLFVAVI (171 aa)). Over 12–18 (LVTEFGN) the chain is Extracellular. The helical transmembrane segment at 19 to 37 (NFINLSFLRLFRAARLIKL) threads the bilayer. At 38 to 56 (LRQGYTIRILLWTFVQSFK) the chain is on the cytoplasmic side. A helical membrane pass occupies residues 57 to 76 (ALPYVCLLIAMLFFIYAIIG). At 77–143 (MQVFGNIGIE…ENSGIKEDEC (67 aa)) the chain is on the extracellular side. A helical transmembrane segment spans residues 144–168 (GNEFAYFYFVSFIFLCSFLMLNLFV). Residues 169–171 (AVI) are Cytoplasmic-facing.

This sequence belongs to the calcium channel alpha-1 subunit (TC 1.A.1.11) family. CACNA1A subfamily. As to quaternary structure, voltage-dependent calcium channels are multisubunit complexes, consisting of alpha-1, alpha-2, beta and delta subunits in a 1:1:1:1 ratio. The channel activity is directed by the pore-forming and voltage-sensitive alpha-1 subunit. In many cases, this subunit is sufficient to generate voltage-sensitive calcium channel activity. The auxiliary subunits beta and alpha-2/delta linked by a disulfide bridge regulate the channel activity.

The protein resides in the cell membrane. The enzyme catalyses Ca(2+)(in) = Ca(2+)(out). Functionally, the isoform alpha-1A gives rise to P and/or Q-type calcium currents. P/Q-type calcium channels belong to the 'high-voltage activated' (HVA) group. The polypeptide is Voltage-dependent P/Q-type calcium channel subunit alpha-1A (CACNA1A) (Gallus gallus (Chicken)).